We begin with the raw amino-acid sequence, 270 residues long: Urease accessory protein UreD (270 aa).

It belongs to the UreD family. In terms of assembly, ureD, UreF and UreG form a complex that acts as a GTP-hydrolysis-dependent molecular chaperone, activating the urease apoprotein by helping to assemble the nickel containing metallocenter of UreC. The UreE protein probably delivers the nickel.

The protein localises to the cytoplasm. Required for maturation of urease via the functional incorporation of the urease nickel metallocenter. This chain is Urease accessory protein UreD, found in Actinobacillus pleuropneumoniae serotype 3 (strain JL03).